The primary structure comprises 437 residues: Enolase (437 aa).

Glutamine 162 provides a ligand contact to (2R)-2-phosphoglycerate. The Proton donor role is filled by glutamate 204. Mg(2+) contacts are provided by aspartate 251, glutamate 297, and aspartate 324. Residues lysine 349, arginine 378, serine 379, and lysine 400 each contribute to the (2R)-2-phosphoglycerate site. Catalysis depends on lysine 349, which acts as the Proton acceptor.

This sequence belongs to the enolase family. Mg(2+) is required as a cofactor.

It is found in the cytoplasm. Its subcellular location is the secreted. It localises to the cell surface. The enzyme catalyses (2R)-2-phosphoglycerate = phosphoenolpyruvate + H2O. Its pathway is carbohydrate degradation; glycolysis; pyruvate from D-glyceraldehyde 3-phosphate: step 4/5. Functionally, catalyzes the reversible conversion of 2-phosphoglycerate (2-PG) into phosphoenolpyruvate (PEP). It is essential for the degradation of carbohydrates via glycolysis. The sequence is that of Enolase from Pelodictyon phaeoclathratiforme (strain DSM 5477 / BU-1).